Consider the following 161-residue polypeptide: Nucleotide-binding protein NE2248 (161 aa).

The protein belongs to the YajQ family.

Its function is as follows. Nucleotide-binding protein. The chain is Nucleotide-binding protein NE2248 from Nitrosomonas europaea (strain ATCC 19718 / CIP 103999 / KCTC 2705 / NBRC 14298).